A 78-amino-acid chain; its full sequence is uncharacterized protein (78 aa).

The tract at residues 1 to 28 (MQANHSVSYLYESSTSKRSNGLFSQTQK) is disordered.

This is an uncharacterized protein from Saccharomyces cerevisiae (strain ATCC 204508 / S288c) (Baker's yeast).